We begin with the raw amino-acid sequence, 121 residues long: MPKKDVRAFLYDILENMKDIIDFTNDMTFDEFLKDKKTQKAVIRSLEVIGEAVKNLPEDFINKYPQVPWKGMARLRDKLIHHYFGINYEIIWDIVINKVPNDIKEIEEIIKDIEGEDENSI.

Active-site residues include Arg76 and His81. The RX(4)HXY motif motif lies at 76 to 83 (RDKLIHHY). Tyr83 is subject to O-di-AMP-tyrosine.

The protein belongs to the HepT RNase toxin family. In terms of assembly, homodimer, probably forms a complex with cognate antitoxin MJ0128. Modified by cognate antitoxin MJ0128; probably at least 2 successive AMPylation events occur on Tyr-83.

In terms of biological role, probable toxic component of a putative type VII toxin-antitoxin (TA) system, probably an RNase. Probably neutralized by cognate antitoxin MJ0128. Neutralization may be due to AMPylation by MJ0128. This is Putative RNase MJ0127 from Methanocaldococcus jannaschii (strain ATCC 43067 / DSM 2661 / JAL-1 / JCM 10045 / NBRC 100440) (Methanococcus jannaschii).